The primary structure comprises 308 residues: uncharacterized protein (308 aa).

This is an uncharacterized protein from Treponema pallidum (strain Nichols).